Consider the following 224-residue polypeptide: Ribonuclease 3 (224 aa).

One can recognise an RNase III domain in the interval 4–127 (YSKLEKCLDY…IMGAIYLESG (124 aa)). E40 contacts Mg(2+). D44 is a catalytic residue. Residues D113 and E116 each coordinate Mg(2+). Residue E116 is part of the active site. Residues 154–223 (DYKTALQEIT…AKIAIDKLKE (70 aa)) form the DRBM domain.

Belongs to the ribonuclease III family. Homodimer. Mg(2+) is required as a cofactor.

The protein resides in the cytoplasm. The enzyme catalyses Endonucleolytic cleavage to 5'-phosphomonoester.. In terms of biological role, digests double-stranded RNA. Involved in the processing of primary rRNA transcript to yield the immediate precursors to the large and small rRNAs (23S and 16S). Processes some mRNAs, and tRNAs when they are encoded in the rRNA operon. Processes pre-crRNA and tracrRNA of type II CRISPR loci if present in the organism. This chain is Ribonuclease 3, found in Aliarcobacter butzleri (strain RM4018) (Arcobacter butzleri).